Here is a 390-residue protein sequence, read N- to C-terminus: Lipid-A-disaccharide synthase (390 aa).

It belongs to the LpxB family.

The catalysed reaction is a lipid X + a UDP-2-N,3-O-bis[(3R)-3-hydroxyacyl]-alpha-D-glucosamine = a lipid A disaccharide + UDP + H(+). Its pathway is bacterial outer membrane biogenesis; LPS lipid A biosynthesis. Functionally, condensation of UDP-2,3-diacylglucosamine and 2,3-diacylglucosamine-1-phosphate to form lipid A disaccharide, a precursor of lipid A, a phosphorylated glycolipid that anchors the lipopolysaccharide to the outer membrane of the cell. The chain is Lipid-A-disaccharide synthase from Haemophilus ducreyi (strain 35000HP / ATCC 700724).